The following is a 704-amino-acid chain: Polyribonucleotide nucleotidyltransferase (704 aa).

Mg(2+) is bound by residues aspartate 487 and aspartate 493. In terms of domain architecture, KH spans 554-613 (PRLLTIKIHPDKIREVIGKGGSTIQAITKETGTQIDIQDDGTIIIASVNAIAAQAAKSRI). An S1 motif domain is found at 623 to 691 (GRIYEGKVAK…KQGRIRLSIK (69 aa)).

Belongs to the polyribonucleotide nucleotidyltransferase family. In terms of assembly, component of the RNA degradosome, which is a multiprotein complex involved in RNA processing and mRNA degradation. It depends on Mg(2+) as a cofactor.

It localises to the cytoplasm. It catalyses the reaction RNA(n+1) + phosphate = RNA(n) + a ribonucleoside 5'-diphosphate. Functionally, involved in mRNA degradation. Catalyzes the phosphorolysis of single-stranded polyribonucleotides processively in the 3'- to 5'-direction. This chain is Polyribonucleotide nucleotidyltransferase, found in Xanthomonas oryzae pv. oryzae (strain MAFF 311018).